Reading from the N-terminus, the 295-residue chain is MKLGFNLDFNELDLTGLKKLDQIFLDYLFKADKSLHKDLMLFRATPLSIIPQDYSKFLLKISPHLDDFLAELFCISKEVTISRLKHKDFDIIYECKRKFVQRVAVKKYPLEKIKDIDFEDVYLKITNLIGTNFTSREFAKQIVIWQQDEESFSLELDIAARYAAYRVFSYYNSLSSWNKNLFLQNDILFNLQQKLDKKNLIDDKKILKYQKNERVDFDYKDSFFNLDEALNNSHYCIYCHKRDKDSCSKGFDVIPHFDRVISVDKIPRLSYRMTTGCPLKQKISEMNYIKAQVLI.

This is an uncharacterized protein from Rickettsia prowazekii (strain Madrid E).